The following is a 504-amino-acid chain: Anaerobic nitric oxide reductase transcription regulator NorR (504 aa).

Asp-57 carries the 4-aspartylphosphate modification. Residues Met-187 to Val-416 enclose the Sigma-54 factor interaction domain. ATP-binding positions include Gly-215–Glu-222 and Ala-278–Glu-287. The H-T-H motif DNA-binding region spans Trp-479–Lys-498.

Its pathway is nitrogen metabolism; nitric oxide reduction. Required for the expression of anaerobic nitric oxide (NO) reductase, acts as a transcriptional activator for at least the norVW operon. Activation also requires sigma-54. This is Anaerobic nitric oxide reductase transcription regulator NorR from Escherichia coli O7:K1 (strain IAI39 / ExPEC).